The following is a 178-amino-acid chain: Small ribosomal subunit protein uS4 (178 aa).

The 63-residue stretch at 104 to 166 (RRLQTIVYRK…PNSPMASENH (63 aa)) folds into the S4 RNA-binding domain. Positions 158 to 178 (NSPMASENHPERTAAVSEENQ) are disordered.

This sequence belongs to the universal ribosomal protein uS4 family. As to quaternary structure, part of the 30S ribosomal subunit. Contacts protein S5. The interaction surface between S4 and S5 is involved in control of translational fidelity.

Its function is as follows. One of the primary rRNA binding proteins, it binds directly to 16S rRNA where it nucleates assembly of the body of the 30S subunit. With S5 and S12 plays an important role in translational accuracy. In Methanococcus maripaludis (strain C6 / ATCC BAA-1332), this protein is Small ribosomal subunit protein uS4.